The following is a 252-amino-acid chain: UPF0736 protein OB1207 (252 aa).

Belongs to the UPF0736 family.

This Oceanobacillus iheyensis (strain DSM 14371 / CIP 107618 / JCM 11309 / KCTC 3954 / HTE831) protein is UPF0736 protein OB1207.